The sequence spans 554 residues: Oxygen-dependent choline dehydrogenase (554 aa).

FAD is bound at residue 4–33 (DYIIIGAGSAGNVLATRLTEDPNTTVLLLE). The active-site Proton acceptor is the H473.

The protein belongs to the GMC oxidoreductase family. It depends on FAD as a cofactor.

It carries out the reaction choline + A = betaine aldehyde + AH2. The catalysed reaction is betaine aldehyde + NAD(+) + H2O = glycine betaine + NADH + 2 H(+). It functions in the pathway amine and polyamine biosynthesis; betaine biosynthesis via choline pathway; betaine aldehyde from choline (cytochrome c reductase route): step 1/1. In terms of biological role, involved in the biosynthesis of the osmoprotectant glycine betaine. Catalyzes the oxidation of choline to betaine aldehyde and betaine aldehyde to glycine betaine at the same rate. This is Oxygen-dependent choline dehydrogenase from Klebsiella pneumoniae subsp. pneumoniae (strain ATCC 700721 / MGH 78578).